A 610-amino-acid polypeptide reads, in one-letter code: Putative sensor histidine kinase NtrY-like (610 aa).

4 helical membrane-spanning segments follow: residues 18–38 (IGIL…TISI), 49–69 (KVIW…ILLT), 92–112 (IVVA…ISSA), and 292–312 (IIFI…GVIV). Residues 314-368 (AKIVNPIKKLVIATDKVKSGDLTVQVPENEVDKDEIGTLYAAFNRMIKQLSRQQR) enclose the HAMP domain. The region spanning 385–596 (KVAHEIKNPL…VIDIRFNLEE (212 aa)) is the Histidine kinase domain. Residue H388 is modified to Phosphohistidine; by autocatalysis.

The protein localises to the cell membrane. It catalyses the reaction ATP + protein L-histidine = ADP + protein N-phospho-L-histidine.. Its function is as follows. Member of the two-component regulatory system RBE_0470/RBE_0312. This Rickettsia bellii (strain RML369-C) protein is Putative sensor histidine kinase NtrY-like.